Here is a 373-residue protein sequence, read N- to C-terminus: tRNA-specific 2-thiouridylase MnmA (373 aa).

ATP-binding positions include 12–19 (GMSGGVDS) and M38. Positions 98-100 (NPD) are interaction with target base in tRNA. The active-site Nucleophile is C103. A disulfide bridge connects residues C103 and C200. G127 contributes to the ATP binding site. The interaction with tRNA stretch occupies residues 150–152 (KDQ). Residue C200 is the Cysteine persulfide intermediate of the active site. The segment at 312-313 (RY) is interaction with tRNA.

The protein belongs to the MnmA/TRMU family.

Its subcellular location is the cytoplasm. It catalyses the reaction S-sulfanyl-L-cysteinyl-[protein] + uridine(34) in tRNA + AH2 + ATP = 2-thiouridine(34) in tRNA + L-cysteinyl-[protein] + A + AMP + diphosphate + H(+). Its function is as follows. Catalyzes the 2-thiolation of uridine at the wobble position (U34) of tRNA, leading to the formation of s(2)U34. The protein is tRNA-specific 2-thiouridylase MnmA of Streptococcus pneumoniae (strain ATCC BAA-255 / R6).